A 257-amino-acid chain; its full sequence is V-type proton ATPase subunit D (257 aa).

The segment at 211-233 (KKKDLKAKEAQKEENSANKTIME) is disordered. Basic and acidic residues predominate over residues 216-226 (KAKEAQKEENS).

It belongs to the V-ATPase D subunit family. V-ATPase is a heteromultimeric enzyme composed of a peripheral catalytic V1 complex (components A to H) attached to an integral membrane V0 proton pore complex (components: a, c, c', c'' and d).

In terms of biological role, subunit of the peripheral V1 complex of vacuolar ATPase. Vacuolar ATPase is responsible for acidifying a variety of intracellular compartments in eukaryotic cells, thus providing most of the energy required for transport processes in the vacuolar system. This is V-type proton ATPase subunit D (atp6v1d) from Dictyostelium discoideum (Social amoeba).